The chain runs to 312 residues: Ribosomal RNA small subunit methyltransferase H (312 aa).

S-adenosyl-L-methionine is bound by residues 32-34 (AGH), D51, F78, D99, and Q106.

The protein belongs to the methyltransferase superfamily. RsmH family.

It is found in the cytoplasm. The enzyme catalyses cytidine(1402) in 16S rRNA + S-adenosyl-L-methionine = N(4)-methylcytidine(1402) in 16S rRNA + S-adenosyl-L-homocysteine + H(+). In terms of biological role, specifically methylates the N4 position of cytidine in position 1402 (C1402) of 16S rRNA. This Exiguobacterium sibiricum (strain DSM 17290 / CCUG 55495 / CIP 109462 / JCM 13490 / 255-15) protein is Ribosomal RNA small subunit methyltransferase H.